A 225-amino-acid polypeptide reads, in one-letter code: MKIMQINLVDYKEWTESLGYDREWKIQNFQHGFLSRLNEIAAEINSFIITYRYDSYIMLLDGVLIGKNDYILTKIKELSPVPIDICFGYGKTLLDAERNCSINMDNILLAKDEKVLVAHFDLDGFSRKRFLFDAYLEVYKIYNKLFNYAMELGGLAYYFGGDNIGIFLGVDNINKVIELANSFPNMKVGIGIGNNPREALKNAAEALHIIRIYRDRKIEIVDSKN.

Belongs to the archaeal-type GTP cyclohydrolase family.

It catalyses the reaction GTP + 3 H2O = 2-amino-5-formylamino-6-(5-phospho-D-ribosylamino)pyrimidin-4(3H)-one + 2 phosphate + 2 H(+). In terms of biological role, catalyzes the formation of 2-amino-5-formylamino-6-ribofuranosylamino-4(3H)-pyrimidinone ribonucleotide monophosphate and inorganic phosphate from GTP. Also has an independent pyrophosphate phosphohydrolase activity. This Sulfurisphaera tokodaii (strain DSM 16993 / JCM 10545 / NBRC 100140 / 7) (Sulfolobus tokodaii) protein is GTP cyclohydrolase III.